We begin with the raw amino-acid sequence, 409 residues long: Arginine biosynthesis bifunctional protein ArgJ (409 aa).

Substrate-binding residues include Thr-156, Lys-182, Thr-193, Glu-280, Asn-404, and Ser-409. Thr-193 acts as the Nucleophile in catalysis.

This sequence belongs to the ArgJ family. In terms of assembly, heterotetramer of two alpha and two beta chains.

The protein resides in the cytoplasm. It catalyses the reaction N(2)-acetyl-L-ornithine + L-glutamate = N-acetyl-L-glutamate + L-ornithine. It carries out the reaction L-glutamate + acetyl-CoA = N-acetyl-L-glutamate + CoA + H(+). It functions in the pathway amino-acid biosynthesis; L-arginine biosynthesis; L-ornithine and N-acetyl-L-glutamate from L-glutamate and N(2)-acetyl-L-ornithine (cyclic): step 1/1. It participates in amino-acid biosynthesis; L-arginine biosynthesis; N(2)-acetyl-L-ornithine from L-glutamate: step 1/4. Functionally, catalyzes two activities which are involved in the cyclic version of arginine biosynthesis: the synthesis of N-acetylglutamate from glutamate and acetyl-CoA as the acetyl donor, and of ornithine by transacetylation between N(2)-acetylornithine and glutamate. The protein is Arginine biosynthesis bifunctional protein ArgJ of Ralstonia nicotianae (strain ATCC BAA-1114 / GMI1000) (Ralstonia solanacearum).